Here is a 485-residue protein sequence, read N- to C-terminus: Carbohydrate sulfotransferase 7 (485 aa).

The Cytoplasmic portion of the chain corresponds to 1–12; it reads MKGRRRRRREYC. A helical; Signal-anchor for type II membrane protein membrane pass occupies residues 13 to 33; that stretch reads KFTLLLALYTLLLLLVPSVLD. The Lumenal segment spans residues 34–485; sequence SGSEQDKGGR…PLETNANWAT (452 aa). The tract at residues 66-88 is disordered; that stretch reads EQGAEVRFQAEGNPDRSPRPQGN. Asn-88 carries an N-linked (GlcNAc...) asparagine glycan. A 3'-phosphoadenylyl sulfate-binding site is contributed by 109–115; it reads WRTGSSF. N-linked (GlcNAc...) asparagine glycosylation occurs at Asn-185. Residue 277-285 coordinates 3'-phosphoadenylyl sulfate; it reads RDPRAVHNS. Asn-406 is a glycosylation site (N-linked (GlcNAc...) asparagine). Ser-461 carries the post-translational modification Phosphoserine. A compositionally biased stretch (basic and acidic residues) spans 465–475; that stretch reads RDVKTVRKGET. The disordered stretch occupies residues 465-485; that stretch reads RDVKTVRKGETPLETNANWAT.

This sequence belongs to the sulfotransferase 1 family. Gal/GlcNAc/GalNAc subfamily.

It localises to the golgi apparatus membrane. The catalysed reaction is chondroitin beta-D-glucuronate + n 3'-phosphoadenylyl sulfate = chondroitin 6'-sulfate + n adenosine 3',5'-bisphosphate + n H(+). Functionally, sulfotransferase that utilizes 3'-phospho-5'-adenylyl sulfate (PAPS) as sulfonate donor to catalyze the transfer of sulfate to position 6 of non-reducing N-acetylglucosamine (GlcNAc) residues. Preferentially acts on mannose-linked GlcNAc. Also able to catalyze the transfer of sulfate to position 6 of the N-acetylgalactosamine (GalNAc) residue of chondroitin. Also acts on core 2 mucin-type oligosaccharide and N-acetyllactosamine oligomer with a lower efficiency. Has weak or no activity toward keratan sulfate and oligosaccharides containing the Galbeta1-4GlcNAc. Catalyzes 6-O-sulfation of beta-benzyl GlcNAc but not alpha- or beta-benzyl GalNAc. The sequence is that of Carbohydrate sulfotransferase 7 (Chst7) from Rattus norvegicus (Rat).